A 305-amino-acid chain; its full sequence is ATP synthase gamma chain (305 aa).

Belongs to the ATPase gamma chain family. As to quaternary structure, F-type ATPases have 2 components, CF(1) - the catalytic core - and CF(0) - the membrane proton channel. CF(1) has five subunits: alpha(3), beta(3), gamma(1), delta(1), epsilon(1). CF(0) has three main subunits: a, b and c.

The protein localises to the cell membrane. Functionally, produces ATP from ADP in the presence of a proton gradient across the membrane. The gamma chain is believed to be important in regulating ATPase activity and the flow of protons through the CF(0) complex. This is ATP synthase gamma chain from Streptomyces griseus subsp. griseus (strain JCM 4626 / CBS 651.72 / NBRC 13350 / KCC S-0626 / ISP 5235).